A 429-amino-acid polypeptide reads, in one-letter code: Cleavage stimulation factor subunit 50 (429 aa).

Positions 20-41 are hydrophobic; it reads LNALIVAHLRHHNLSQVASAVA. 7 WD repeats span residues 121-160, 174-213, 218-257, 264-303, 308-347, 351-392, and 396-429; these read EHKS…QMIS, DHAE…AKRA, QDTH…CFLP, GVSG…CVRS, HGKS…MVKE, AKRV…KVAK, and NHNG…KESV.

As to quaternary structure, homodimer. Belongs to the CSTF complex. Forms a complex with cleavage and polyadenylation specificity factor (CPSF) subunits CSTF64, PABN3, CPSF30, FIPS5 and CPSF100.

It localises to the nucleus. One of the multiple factors required for polyadenylation and 3'-end cleavage of pre-mRNAs. May be responsible for the interaction of CSTF with other factors to form a stable complex on the pre-mRNA. This Arabidopsis thaliana (Mouse-ear cress) protein is Cleavage stimulation factor subunit 50.